The chain runs to 297 residues: Ectoine dioxygenase (297 aa).

An L-ectoine-binding site is contributed by Gln-131. Lys-137 provides a ligand contact to 2-oxoglutarate. The Fe cation site is built by His-148, Asp-150, and His-249.

The protein belongs to the PhyH family. EctD subfamily. In terms of assembly, homodimer. The cofactor is Fe(2+).

The catalysed reaction is L-ectoine + 2-oxoglutarate + O2 = 5-hydroxyectoine + succinate + CO2. Functionally, involved in the biosynthesis of 5-hydroxyectoine, called compatible solute, which helps organisms to survive extreme osmotic stress by acting as a highly soluble organic osmolyte. Catalyzes the 2-oxoglutarate-dependent selective hydroxylation of L-ectoine to yield (4S,5S)-5-hydroxyectoine. The chain is Ectoine dioxygenase from Streptomyces anulatus (Streptomyces chrysomallus).